The primary structure comprises 661 residues: Zeaxanthin epoxidase, chloroplastic (661 aa).

The N-terminal 50 residues, 1-50 (MASTLFYNSMNLSAAVFSRTHFPIPINKDFPLEFSPCIHTDYHLRSRTRS), are a transit peptide targeting the chloroplast. FAD contacts are provided by residues 82–110 (RILV…VVFE) and 360–373 (ILTW…LLGD). The region spanning 558–607 (CIIGSAPHGDVSGISIAIPKPQVSEMHARISYKDGAFYLTDLRSEHGTWI) is the FHA domain.

The cofactor is FAD.

The protein localises to the plastid. The protein resides in the chloroplast. It catalyses the reaction all-trans-zeaxanthin + 4 reduced [2Fe-2S]-[ferredoxin] + 2 O2 + 4 H(+) = all-trans-violaxanthin + 4 oxidized [2Fe-2S]-[ferredoxin] + 2 H2O. It participates in plant hormone biosynthesis; abscisate biosynthesis. Functionally, converts zeaxanthin into antheraxanthin and subsequently violaxanthin. Involved in the epoxidation of zeaxanthin. The chain is Zeaxanthin epoxidase, chloroplastic from Prunus armeniaca (Apricot).